Here is a 508-residue protein sequence, read N- to C-terminus: Photosystem II CP47 reaction center protein (508 aa).

6 helical membrane passes run 21–36, 101–115, 140–156, 203–218, 237–252, and 457–472; these read SVHI…WAGS, IVFS…IWHW, GIHL…FGAF, IAAG…FHLS, VLSS…AFIV, and SFAL…HGAR.

It belongs to the PsbB/PsbC family. PsbB subfamily. In terms of assembly, PSII is composed of 1 copy each of membrane proteins PsbA, PsbB, PsbC, PsbD, PsbE, PsbF, PsbH, PsbI, PsbJ, PsbK, PsbL, PsbM, PsbT, PsbX, PsbY, PsbZ, Psb30/Ycf12, at least 3 peripheral proteins of the oxygen-evolving complex and a large number of cofactors. It forms dimeric complexes. Requires Binds multiple chlorophylls. PSII binds additional chlorophylls, carotenoids and specific lipids. as cofactor.

The protein localises to the plastid. Its subcellular location is the chloroplast thylakoid membrane. Its function is as follows. One of the components of the core complex of photosystem II (PSII). It binds chlorophyll and helps catalyze the primary light-induced photochemical processes of PSII. PSII is a light-driven water:plastoquinone oxidoreductase, using light energy to abstract electrons from H(2)O, generating O(2) and a proton gradient subsequently used for ATP formation. The chain is Photosystem II CP47 reaction center protein from Amborella trichopoda.